A 290-amino-acid chain; its full sequence is Eukaryotic translation initiation factor 3 subunit G (290 aa).

Residues 1-12 (MADSKQSNRDWA) show a composition bias toward basic and acidic residues. 2 disordered regions span residues 1–30 (MADSKQSNRDWAADDVDADELPPTTESTDA) and 173–192 (AGETGGKYVPPSQRAGATGA). Residues 204-285 (PTLRVTSLSI…LILEVAWSQP (82 aa)) enclose the RRM domain.

The protein belongs to the eIF-3 subunit G family. In terms of assembly, component of the eukaryotic translation initiation factor 3 (eIF-3) complex.

The protein resides in the cytoplasm. In terms of biological role, RNA-binding component of the eukaryotic translation initiation factor 3 (eIF-3) complex, which is involved in protein synthesis of a specialized repertoire of mRNAs and, together with other initiation factors, stimulates binding of mRNA and methionyl-tRNAi to the 40S ribosome. The eIF-3 complex specifically targets and initiates translation of a subset of mRNAs involved in cell proliferation. This subunit can bind 18S rRNA. The sequence is that of Eukaryotic translation initiation factor 3 subunit G from Cryptococcus neoformans var. neoformans serotype D (strain B-3501A) (Filobasidiella neoformans).